Consider the following 427-residue polypeptide: Peptidase B (427 aa).

Mn(2+) contacts are provided by K195 and D200. Residue K207 is part of the active site. D218, D277, and E279 together coordinate Mn(2+). R281 is a catalytic residue.

It belongs to the peptidase M17 family. As to quaternary structure, homohexamer. Mn(2+) is required as a cofactor.

It localises to the cytoplasm. The catalysed reaction is Release of an N-terminal amino acid, Xaa, from a peptide or arylamide. Xaa is preferably Glu or Asp but may be other amino acids, including Leu, Met, His, Cys and Gln.. In terms of biological role, probably plays an important role in intracellular peptide degradation. This is Peptidase B from Escherichia coli O139:H28 (strain E24377A / ETEC).